An 83-amino-acid polypeptide reads, in one-letter code: Cytochrome b559 subunit alpha (83 aa).

The chain crosses the membrane as a helical span at residues Val22–Trp36. His24 is a heme binding site.

It belongs to the PsbE/PsbF family. Heterodimer of an alpha subunit and a beta subunit. PSII is composed of 1 copy each of membrane proteins PsbA, PsbB, PsbC, PsbD, PsbE, PsbF, PsbH, PsbI, PsbJ, PsbK, PsbL, PsbM, PsbT, PsbX, PsbY, PsbZ, Psb30/Ycf12, peripheral proteins PsbO, CyanoQ (PsbQ), PsbU, PsbV and a large number of cofactors. It forms dimeric complexes. The cofactor is heme b.

It is found in the cellular thylakoid membrane. Functionally, this b-type cytochrome is tightly associated with the reaction center of photosystem II (PSII). PSII is a light-driven water:plastoquinone oxidoreductase that uses light energy to abstract electrons from H(2)O, generating O(2) and a proton gradient subsequently used for ATP formation. It consists of a core antenna complex that captures photons, and an electron transfer chain that converts photonic excitation into a charge separation. The protein is Cytochrome b559 subunit alpha of Synechococcus elongatus (strain ATCC 33912 / PCC 7942 / FACHB-805) (Anacystis nidulans R2).